The sequence spans 645 residues: Cilia- and flagella-associated protein 221 homolog (645 aa).

The segment at 381–408 (GGAVHQPSAPVGSSSSGGGGGSDPAFKP) is disordered. Positions 428-435 (THQRLQRR) are interaction with calmodulin.

Belongs to the PCDP1 family. As to quaternary structure, interacts with calmodulin; calcium-dependent. Part of the PDCP1 complex composed of CFAP46, CFAP54, CFAP74 and CFAP221; the PDCP1 complex binds calmodulin.

It is found in the cytoplasm. The protein resides in the cytoskeleton. Its subcellular location is the cilium axoneme. Functionally, may play a role in cilium morphogenesis. The chain is Cilia- and flagella-associated protein 221 homolog from Chlamydomonas reinhardtii (Chlamydomonas smithii).